Reading from the N-terminus, the 204-residue chain is Large ribosomal subunit protein eL15 (204 aa).

Belongs to the eukaryotic ribosomal protein eL15 family. As to quaternary structure, component of the large ribosomal subunit.

It localises to the cytoplasm. In terms of biological role, component of the large ribosomal subunit. The ribosome is a large ribonucleoprotein complex responsible for the synthesis of proteins in the cell. In Hypophthalmichthys nobilis (Bighead carp), this protein is Large ribosomal subunit protein eL15 (rpl15).